Reading from the N-terminus, the 410-residue chain is Peptidase T (410 aa).

His-78 serves as a coordination point for Zn(2+). Asp-80 is an active-site residue. Position 140 (Asp-140) interacts with Zn(2+). Catalysis depends on Glu-174, which acts as the Proton acceptor. Positions 175, 197, and 379 each coordinate Zn(2+).

Belongs to the peptidase M20B family. The cofactor is Zn(2+).

The protein resides in the cytoplasm. The catalysed reaction is Release of the N-terminal residue from a tripeptide.. Its function is as follows. Cleaves the N-terminal amino acid of tripeptides. The chain is Peptidase T from Staphylococcus saprophyticus subsp. saprophyticus (strain ATCC 15305 / DSM 20229 / NCIMB 8711 / NCTC 7292 / S-41).